Consider the following 194-residue polypeptide: MRLCDTHIEEYLDAGKIVITPRPPKSAISGVSVDIRLGNEFRVFSEHTTPYIDLSGPKEEVSSALDKVMSEPIIIAKNESFFLHPGELALAVTYENVTLPDDIVGWLDGRSSLARLGLMVHVTAHRIDPGWSGKIVLEFYNSGKIPLALRPEMTIAALNFEVLSAPAARPYNKRVDAKYQVQQGAVASRINQDN.

DCTP contacts are provided by residues 110-115 (RSSLAR), Asp128, 136-138 (VLE), Tyr171, Lys178, and Gln182. Catalysis depends on Glu138, which acts as the Proton donor/acceptor.

This sequence belongs to the dCTP deaminase family. Homotrimer.

The enzyme catalyses dCTP + H2O + H(+) = dUTP + NH4(+). It functions in the pathway pyrimidine metabolism; dUMP biosynthesis; dUMP from dCTP (dUTP route): step 1/2. Its function is as follows. Catalyzes the deamination of dCTP to dUTP. The chain is dCTP deaminase from Psychromonas ingrahamii (strain DSM 17664 / CCUG 51855 / 37).